Here is a 142-residue protein sequence, read N- to C-terminus: Protein OrfX1 (142 aa).

It belongs to the TULIP P47 family. As to quaternary structure, orfX1 was not detected as part of a crude toxin extract that includes BoNTA2/NTNH, P47, OrfX2 and OrfX3.

In terms of biological role, part of a botulinum neurotoxin type A2 (BoNT) locus; may be part of a progenitor toxin complex required to protect BoNT during its passage through the host gastrointestinal tract. Binds phosphatidylinositol (3,4) bisphosphate, phosphatidylethanolamine and phosphatidylserine. This chain is Protein OrfX1 (orfX1), found in Clostridium botulinum (strain Kyoto / Type A2).